Here is a 379-residue protein sequence, read N- to C-terminus: Queuine tRNA-ribosyltransferase (379 aa).

The active-site Proton acceptor is the Asp-94. Residues 94–98, Asp-148, Gln-191, and Gly-218 each bind substrate; that span reads DSGGF. Residues 249–255 are RNA binding; the sequence is GVGSPDS. Residue Asp-268 is the Nucleophile of the active site. Positions 273 to 277 are RNA binding; important for wobble base 34 recognition; it reads TRIAR. Zn(2+) is bound by residues Cys-306, Cys-308, Cys-311, and His-337.

Belongs to the queuine tRNA-ribosyltransferase family. In terms of assembly, homodimer. Within each dimer, one monomer is responsible for RNA recognition and catalysis, while the other monomer binds to the replacement base PreQ1. The cofactor is Zn(2+).

It catalyses the reaction 7-aminomethyl-7-carbaguanine + guanosine(34) in tRNA = 7-aminomethyl-7-carbaguanosine(34) in tRNA + guanine. It functions in the pathway tRNA modification; tRNA-queuosine biosynthesis. Catalyzes the base-exchange of a guanine (G) residue with the queuine precursor 7-aminomethyl-7-deazaguanine (PreQ1) at position 34 (anticodon wobble position) in tRNAs with GU(N) anticodons (tRNA-Asp, -Asn, -His and -Tyr). Catalysis occurs through a double-displacement mechanism. The nucleophile active site attacks the C1' of nucleotide 34 to detach the guanine base from the RNA, forming a covalent enzyme-RNA intermediate. The proton acceptor active site deprotonates the incoming PreQ1, allowing a nucleophilic attack on the C1' of the ribose to form the product. After dissociation, two additional enzymatic reactions on the tRNA convert PreQ1 to queuine (Q), resulting in the hypermodified nucleoside queuosine (7-(((4,5-cis-dihydroxy-2-cyclopenten-1-yl)amino)methyl)-7-deazaguanosine). This Bacillus mycoides (strain KBAB4) (Bacillus weihenstephanensis) protein is Queuine tRNA-ribosyltransferase.